Reading from the N-terminus, the 538-residue chain is Cytochrome P450 monooxygenase verH (538 aa).

The helical transmembrane segment at 2–21 threads the bilayer; the sequence is VFAMLVVCWSIFLGLWMLVS. Cys445 is a binding site for heme.

The protein belongs to the cytochrome P450 family. Requires heme as cofactor.

It localises to the membrane. It participates in secondary metabolite biosynthesis; terpenoid biosynthesis. Its pathway is mycotoxin biosynthesis. Cytochrome P450 monooxygenase; part of the gene cluster that mediates the biosynthesis of the neurotoxin verrucosidin, a methylated alpha-pyrone polyketide that inhibits oxidative phosphorylation in mitochondria and thereby causes neurological diseases. The carbon backbone of verrucosidin is synthesized by the HR-PKS verA, and further modified by the other verrucodidin cluster enzymes. The polypeptide is Cytochrome P450 monooxygenase verH (Penicillium polonicum).